Consider the following 456-residue polypeptide: Acid sphingomyelinase-like phosphodiesterase 3b (456 aa).

The N-terminal stretch at 1–18 (MTLLGWLIFLAPWGVAGA) is a signal peptide. Asp-28 and His-30 together coordinate Zn(2+). Asn-34 is a glycosylation site (N-linked (GlcNAc...) asparagine). Cys-45 and Cys-64 are joined by a disulfide. An N-linked (GlcNAc...) asparagine glycan is attached at Asn-72. Asp-93 provides a ligand contact to Zn(2+). N-linked (GlcNAc...) asparagine glycosylation occurs at Asn-100. A Zn(2+)-binding site is contributed by Asn-134. N-linked (GlcNAc...) asparagine glycosylation is found at Asn-164 and Asn-223. 3 residues coordinate Zn(2+): His-236, His-277, and His-279. 2 disulfides stabilise this stretch: Cys-405–Cys-409 and Cys-415–Cys-428.

This sequence belongs to the acid sphingomyelinase family. Interacts with TLR4, TLR7, TLR8 and TLR9. Zn(2+) serves as cofactor. N-glycosylated. In terms of tissue distribution, macrophages and dendritic cells.

It localises to the secreted. Its subcellular location is the cell membrane. In terms of biological role, lipid-modulating phosphodiesterase. Active on the surface of macrophages and dendritic cells and strongly influences macrophage lipid composition and membrane fluidity. Acts as a negative regulator of Toll-like receptor signaling. Has in vitro phosphodiesterase activity, but the physiological substrate is unknown. Lacks activity with phosphocholine-containing lipids, but can cleave CDP-choline, and can release phosphate from ATP and ADP (in vitro). The protein is Acid sphingomyelinase-like phosphodiesterase 3b (Smpdl3b) of Mus musculus (Mouse).